Here is an 829-residue protein sequence, read N- to C-terminus: pre-rRNA 2'-O-ribose RNA methyltransferase FTSJ3 (829 aa).

S-adenosyl-L-methionine contacts are provided by glycine 56, tryptophan 58, aspartate 76, aspartate 92, and aspartate 117. Lysine 157 (proton acceptor) is an active-site residue. The interval 332–367 (ISLSSEEEGDEEESAAETKQASEEEEEREEEEQLNR) is disordered. A phosphoserine mark is found at serine 333, serine 335, serine 336, serine 345, and serine 353. Acidic residues predominate over residues 336–346 (SEEEGDEEESA). Residues 354-363 (EEEEEREEEE) show a composition bias toward acidic residues. Position 389 is a citrulline (arginine 389). Disordered regions lie at residues 443–508 (FLSD…PLLV) and 528–634 (DGFS…GFEV). The span at 456–473 (DAEDDDDTSLESDLDPEE) shows a compositional bias: acidic residues. 2 positions are modified to phosphoserine: serine 531 and serine 544. Lysine 570 participates in a covalent cross-link: Glycyl lysine isopeptide (Lys-Gly) (interchain with G-Cter in SUMO2). Serine 575 is modified (phosphoserine). Residues lysine 626 and lysine 642 each participate in a glycyl lysine isopeptide (Lys-Gly) (interchain with G-Cter in SUMO2) cross-link. Serine 659 carries the phosphoserine modification. Lysine 661 is covalently cross-linked (Glycyl lysine isopeptide (Lys-Gly) (interchain with G-Cter in SUMO2)). Phosphoserine is present on serine 671. Lysine 693 is covalently cross-linked (Glycyl lysine isopeptide (Lys-Gly) (interchain with G-Cter in SUMO2)). The stretch at 722-760 (IKKVAEAKARKKRRMLKKLEQTKKKAEAVVNTVDISERE) forms a coiled coil. Arginine 766 carries the post-translational modification Citrulline. Residues 794 to 804 (VRRPAGVRGHF) are compositionally biased toward basic residues. Residues 794–829 (VRRPAGVRGHFKVVDSRMKKDQRAQRKEQKRNHRRK) are disordered. Residues 805–820 (KVVDSRMKKDQRAQRK) are compositionally biased toward basic and acidic residues.

This sequence belongs to the class I-like SAM-binding methyltransferase superfamily. RNA methyltransferase RlmE family. SPB1 subfamily. As to quaternary structure, interacts with NIP7. Citrullinated by PADI4.

Its subcellular location is the nucleus. The protein resides in the nucleolus. The catalysed reaction is a ribonucleotide in rRNA + S-adenosyl-L-methionine = a 2'-O-methylribonucleotide in rRNA + S-adenosyl-L-homocysteine + H(+). Its function is as follows. RNA 2'-O-methyltransferase involved in the processing of the 34S pre-rRNA to 18S rRNA and in 40S ribosomal subunit formation. In Rattus norvegicus (Rat), this protein is pre-rRNA 2'-O-ribose RNA methyltransferase FTSJ3 (Ftsj3).